The sequence spans 784 residues: Toll-like receptor 2 (784 aa).

The N-terminal stretch at 1–18 (MPHTLWMVWVLGVIISLS) is a signal peptide. The Extracellular segment spans residues 19 to 587 (KEESSNQASL…VRLSVSECHR (569 aa)). A disulfide bridge connects residues Cys30 and Cys36. 19 LRR repeats span residues 54-77 (VKSLDLSNNRITYISNSDLQRYVN), 78-101 (LQALVLTSNGINTIEEDSFSSLGR), 102-125 (LEHLDLSYNYLSNLSSSWFKPLSS), 126-150 (LKFLNLLGNPYKTLGETSLFSHLTK), 151-175 (LRILRVGNMDTFTKIQRKDFAGLTF), 176-199 (LEELEIDASDLQSYEPKSLKSIQN), 200-223 (VSHLILHMKQHILLLEIFVDLTSS), 224-250 (VECLELRDTDLDTFHFSELSTGETNSL), 251-278 (IKKFTFRNVKITDESLFQVMKLLSQISG), 279-308 (LLELEFDDCTLNGVGDFRGSDNDRVIDPGK), 309-337 (VETVTIRRLHIPQFYSFNDLSTLYPLTER), 338-361 (VKRITVENSKVFLVPCLLSRHLKS), 362-388 (LEYLDLSENLMVEEYLKNSACEDAWPS), 389-414 (LQTLILRQNHLASLGKTGETLLTLKN), 415-437 (LTNLDISKNTFHYMPETCQWPEK), 438-457 (MKYLNLSSTRIHSVTGCIPK), 458-478 (TLEILDISNNNLNLFSLNLPQ), 479-500 (LKELYISRNKLMTLPDASLLPM), and 501-524 (LLVLKISRNTITTFSKEQLDSFHT). The N-linked (GlcNAc...) asparagine glycan is linked to Asn114. Asn199 carries an N-linked (GlcNAc...) asparagine glycan. Cys353 and Cys382 are oxidised to a cystine. The N-linked (GlcNAc...) asparagine glycan is linked to Asn414. Residues Cys432 and Cys454 are joined by a disulfide bond. Asn442 carries an N-linked (GlcNAc...) asparagine glycan. An LRRCT domain is found at 525 to 579 (LKTLEAGGNNFICSCEFLSFTQEQQALAKVLVDWPANYLCDSPSHVRGQRVQDVR). Residues 588–608 (AALVSGMCCALFLLILLMGVL) traverse the membrane as a helical segment. The Cytoplasmic portion of the chain corresponds to 609–784 (CHRFHGLWYM…WVNLRAAIKS (176 aa)). One can recognise a TIR domain in the interval 639–782 (ICYDAFVSYS…GFWVNLRAAI (144 aa)). Lys754 participates in a covalent cross-link: Glycyl lysine isopeptide (Lys-Gly) (interchain with G-Cter in ubiquitin). Positions 761–778 (YLEWPMDEARQEGFWVNL) match the ATG16L1-binding motif motif.

This sequence belongs to the Toll-like receptor family. Interacts with LY96, TLR1 and TLR6 (via extracellular domain). TLR2 seems to exist in heterodimers with either TLR1 or TLR6 before stimulation by the ligand. The heterodimers form bigger oligomers in response to their corresponding ligands as well as further heterotypic associations with other receptors such as CD14 and/or CD36. Binds MYD88 (via TIR domain). Interacts with TICAM1. Interacts with CNPY3. Interacts with ATG16L1. Interacts with PPP1R11. Interacts with TICAM2. Interacts with TIRAP. Ubiquitinated at Lys-754 by PPP1R11, leading to its degradation. Deubiquitinated by USP2. In terms of processing, glycosylation of Asn-442 is critical for secretion of the N-terminal ectodomain of TLR2.

The protein localises to the membrane. The protein resides in the cytoplasmic vesicle. It localises to the phagosome membrane. Its subcellular location is the membrane raft. Functionally, cooperates with LY96 to mediate the innate immune response to bacterial lipoproteins and other microbial cell wall components. Cooperates with TLR1 or TLR6 to mediate the innate immune response to bacterial lipoproteins or lipopeptides. Acts via MYD88 and TRAF6, leading to NF-kappa-B activation, cytokine secretion and the inflammatory response. May also promote apoptosis in response to lipoproteins. Forms activation clusters composed of several receptors depending on the ligand, these clusters trigger signaling from the cell surface and subsequently are targeted to the Golgi in a lipid-raft dependent pathway. Forms the cluster TLR2:TLR6:CD14:CD36 in response to diacylated lipopeptides and TLR2:TLR1:CD14 in response to triacylated lipopeptides. The protein is Toll-like receptor 2 (TLR2) of Macaca fascicularis (Crab-eating macaque).